A 429-amino-acid chain; its full sequence is UDP-N-acetylglucosamine 1-carboxyvinyltransferase (429 aa).

Residue 22–23 (KN) participates in phosphoenolpyruvate binding. Residue Arg-102 participates in UDP-N-acetyl-alpha-D-glucosamine binding. Cys-126 (proton donor) is an active-site residue. Cys-126 bears the 2-(S-cysteinyl)pyruvic acid O-phosphothioketal mark. Residues 131 to 135 (RPVDL), Asp-316, and Ile-338 contribute to the UDP-N-acetyl-alpha-D-glucosamine site.

Belongs to the EPSP synthase family. MurA subfamily.

Its subcellular location is the cytoplasm. It carries out the reaction phosphoenolpyruvate + UDP-N-acetyl-alpha-D-glucosamine = UDP-N-acetyl-3-O-(1-carboxyvinyl)-alpha-D-glucosamine + phosphate. The protein operates within cell wall biogenesis; peptidoglycan biosynthesis. In terms of biological role, cell wall formation. Adds enolpyruvyl to UDP-N-acetylglucosamine. The chain is UDP-N-acetylglucosamine 1-carboxyvinyltransferase from Methylorubrum extorquens (strain CM4 / NCIMB 13688) (Methylobacterium extorquens).